The sequence spans 347 residues: CD5 antigen-like (347 aa).

The N-terminal stretch at M1–A19 is a signal peptide. SRCR domains follow at residues V24–E125, V138–E239, and L244–S346. Intrachain disulfides connect C33–C67, C49–C114, C62–C124, C96–C106, C163–C228, C176–C238, C208–C218, C253–C287, C269–C335, C282–C345, and C315–C325.

In terms of assembly, interacts with FASN; the interaction is direct. Interacts (via SRCR2 and SRCR3) with pentameric IgM (via Fc region); disulfide-linked. Post-translationally, not N-glycosylated. Probably not O-glycosylated. Expressed in spleen, lymph node, thymus, bone marrow, and fetal liver, but not in non-lymphoid tissues.

The protein resides in the secreted. The protein localises to the cytoplasm. Its function is as follows. Secreted protein that acts as a key regulator of lipid synthesis: mainly expressed by macrophages in lymphoid and inflamed tissues and regulates mechanisms in inflammatory responses, such as infection or atherosclerosis. Able to inhibit lipid droplet size in adipocytes. Following incorporation into mature adipocytes via CD36-mediated endocytosis, associates with cytosolic FASN, inhibiting fatty acid synthase activity and leading to lipolysis, the degradation of triacylglycerols into glycerol and free fatty acids (FFA). CD5L-induced lipolysis occurs with progression of obesity: participates in obesity-associated inflammation following recruitment of inflammatory macrophages into adipose tissues, a cause of insulin resistance and obesity-related metabolic disease. Regulation of intracellular lipids mediated by CD5L has a direct effect on transcription regulation mediated by nuclear receptors ROR-gamma (RORC). Acts as a key regulator of metabolic switch in T-helper Th17 cells. Regulates the expression of pro-inflammatory genes in Th17 cells by altering the lipid content and limiting synthesis of cholesterol ligand of RORC, the master transcription factor of Th17-cell differentiation. CD5L is mainly present in non-pathogenic Th17 cells, where it decreases the content of polyunsaturated fatty acyls (PUFA), affecting two metabolic proteins MSMO1 and CYP51A1, which synthesize ligands of RORC, limiting RORC activity and expression of pro-inflammatory genes. Participates in obesity-associated autoimmunity via its association with IgM, interfering with the binding of IgM to Fcalpha/mu receptor and enhancing the development of long-lived plasma cells that produce high-affinity IgG autoantibodies. Also acts as an inhibitor of apoptosis in macrophages: promotes macrophage survival from the apoptotic effects of oxidized lipids in case of atherosclerosis. Involved in early response to microbial infection against various pathogens by acting as a pattern recognition receptor and by promoting autophagy. The chain is CD5 antigen-like (CD5L) from Homo sapiens (Human).